The sequence spans 162 residues: MNSIRNFFKTFLLVELVKGLMVTGRYFFARKITVQFPEEKTPISPRFRGLHAQRRYANGEERCIACKLCEAVCPAMAISIESEQREDGTRRTSRYDIDLTKCIFCGFCEEACPVDAIVETHIFEYHGEKRGDLYYTKPMLLAIGDKYEAEIAANKAADAKYR.

2 4Fe-4S ferredoxin-type domains span residues Gln53–Glu83 and Ser93–Ile122. Residues Cys63, Cys66, Cys69, Cys73, Cys102, Cys105, Cys108, and Cys112 each coordinate [4Fe-4S] cluster.

Belongs to the complex I 23 kDa subunit family. NDH-1 is composed of 14 different subunits. Subunits NuoA, H, J, K, L, M, N constitute the membrane sector of the complex. The cofactor is [4Fe-4S] cluster.

The protein localises to the cell inner membrane. It carries out the reaction a quinone + NADH + 5 H(+)(in) = a quinol + NAD(+) + 4 H(+)(out). In terms of biological role, NDH-1 shuttles electrons from NADH, via FMN and iron-sulfur (Fe-S) centers, to quinones in the respiratory chain. The immediate electron acceptor for the enzyme in this species is believed to be ubiquinone. Couples the redox reaction to proton translocation (for every two electrons transferred, four hydrogen ions are translocated across the cytoplasmic membrane), and thus conserves the redox energy in a proton gradient. This is NADH-quinone oxidoreductase subunit I from Chromobacterium violaceum (strain ATCC 12472 / DSM 30191 / JCM 1249 / CCUG 213 / NBRC 12614 / NCIMB 9131 / NCTC 9757 / MK).